The sequence spans 249 residues: AA9 family lytic polysaccharide monooxygenase A (249 aa).

Residues 1–21 (MALSKIAALSTILASASLVAG) form the signal peptide. H22 lines the Cu(2+) pocket. H22 is modified (methylhistidine). N-linked (GlcNAc...) asparagine glycans are attached at residues N34 and N80. 2 disulfide bridges follow: C77/C199 and C118/C122. H107 is a binding site for Cu(2+). H185 and Q194 together coordinate O2. Y196 provides a ligand contact to Cu(2+).

Belongs to the polysaccharide monooxygenase AA9 family. Cu(2+) is required as a cofactor. Post-translationally, the catalytically essential N-terminal histidine His-22 is post-translationally modified by methylation to prevent protonation of the histidine side chain, and protect the critical active site of the enzyme from oxidative damage.

It is found in the secreted. The enzyme catalyses [(1-&gt;4)-beta-D-glucosyl]n+m + reduced acceptor + O2 = 4-dehydro-beta-D-glucosyl-[(1-&gt;4)-beta-D-glucosyl]n-1 + [(1-&gt;4)-beta-D-glucosyl]m + acceptor + H2O.. Its function is as follows. Lytic polysaccharide monooxygenase (LPMO) that exhibits a mixed C1/C4 oxidative cleavage activity on cellulose and xyloglucan. Catalysis by LPMOs requires the reduction of the active-site copper from Cu(II) to Cu(I) by a reducing agent and H(2)O(2) or O(2) as a cosubstrate. Shows a higher boosting effect with cellulases on the enzymatic saccharification of complex lignocellulosic substrates associated with xyloglucan than on the lignocellulosic substrates without xyloglucan. The oxidative cleavage of xyloglucan by LPMO9A may facilitate to open up the sterical hindrance of cellulose by xyloglucan and thereby increase accessibility for cellulase to lignocellulosic substrates. This chain is AA9 family lytic polysaccharide monooxygenase A, found in Penicillium parvum (Eupenicillium parvum).